A 508-amino-acid polypeptide reads, in one-letter code: Photosystem II CP47 reaction center protein (508 aa).

A run of 6 helical transmembrane segments spans residues 21-36, 101-115, 140-156, 203-218, 237-252, and 457-472; these read AVHI…WAGS, IVFS…IWHW, GIHL…FGAF, IAAG…FHLS, VLSS…AFVV, and SFAL…HGSR.

This sequence belongs to the PsbB/PsbC family. PsbB subfamily. In terms of assembly, PSII is composed of 1 copy each of membrane proteins PsbA, PsbB, PsbC, PsbD, PsbE, PsbF, PsbH, PsbI, PsbJ, PsbK, PsbL, PsbM, PsbT, PsbX, PsbY, PsbZ, Psb30/Ycf12, at least 3 peripheral proteins of the oxygen-evolving complex and a large number of cofactors. It forms dimeric complexes. Binds multiple chlorophylls. PSII binds additional chlorophylls, carotenoids and specific lipids. serves as cofactor.

It is found in the plastid. The protein resides in the chloroplast thylakoid membrane. Functionally, one of the components of the core complex of photosystem II (PSII). It binds chlorophyll and helps catalyze the primary light-induced photochemical processes of PSII. PSII is a light-driven water:plastoquinone oxidoreductase, using light energy to abstract electrons from H(2)O, generating O(2) and a proton gradient subsequently used for ATP formation. The protein is Photosystem II CP47 reaction center protein of Populus trichocarpa (Western balsam poplar).